A 255-amino-acid polypeptide reads, in one-letter code: MHSSPELLLEARGIRKSYHKDKIELPILRGIDVGFVTGEMSALVGRSGSGKSTLMHLLATLDQPDSGEVWFDGTRIDNQSRARRDQYRNSQIGIIFQFYHLLPELSAIENVLAPAMIRRSVLGYLRDRKSLRLRAEAMLDRVGLLTRSHHQPSEMSGGEMQRVAIARSLMSNPKLLLADEPTGNLDTETGATILSLLRELNREDELTIVMITHDDSIAETADRCYRMCDGLLEDNASNLAGGDRSDSAKLETVAA.

Residues 9–254 (LEARGIRKSY…SDSAKLETVA (246 aa)) form the ABC transporter domain. 45 to 52 (GRSGSGKS) provides a ligand contact to ATP.

This sequence belongs to the ABC transporter superfamily. Lipoprotein translocase (TC 3.A.1.125) family. As to quaternary structure, the complex is composed of two ATP-binding proteins (LolD) and two transmembrane proteins (LolC and LolE).

Its subcellular location is the cell inner membrane. Its function is as follows. Part of the ABC transporter complex LolCDE involved in the translocation of mature outer membrane-directed lipoproteins, from the inner membrane to the periplasmic chaperone, LolA. Responsible for the formation of the LolA-lipoprotein complex in an ATP-dependent manner. The chain is Lipoprotein-releasing system ATP-binding protein LolD 2 from Rhodopirellula baltica (strain DSM 10527 / NCIMB 13988 / SH1).